The following is a 99-amino-acid chain: Thylakoid membrane protein ssl2009 (99 aa).

A helical membrane pass occupies residues 10–30 (GFLLGTVIGGVVGGILGSVLA). A coiled-coil region spans residues 50 to 84 (NLDSEENIELARRRLEDKIAQLNLVIDDVRDQLGH).

It is found in the cellular thylakoid membrane. This chain is Thylakoid membrane protein ssl2009, found in Synechocystis sp. (strain ATCC 27184 / PCC 6803 / Kazusa).